The following is a 637-amino-acid chain: Threonine--tRNA ligase (637 aa).

Positions 1 to 61 (MPVITLPNGS…EQDAALSIVT (61 aa)) constitute a TGS domain. The tract at residues 242-533 (DHRKLGKKFD…LIENYEGAFP (292 aa)) is catalytic. Zn(2+) is bound by residues Cys-333, His-384, and His-510.

It belongs to the class-II aminoacyl-tRNA synthetase family. As to quaternary structure, homodimer. Zn(2+) serves as cofactor.

It localises to the cytoplasm. The catalysed reaction is tRNA(Thr) + L-threonine + ATP = L-threonyl-tRNA(Thr) + AMP + diphosphate + H(+). Catalyzes the attachment of threonine to tRNA(Thr) in a two-step reaction: L-threonine is first activated by ATP to form Thr-AMP and then transferred to the acceptor end of tRNA(Thr). Also edits incorrectly charged L-seryl-tRNA(Thr). This chain is Threonine--tRNA ligase, found in Teredinibacter turnerae (strain ATCC 39867 / T7901).